A 199-amino-acid polypeptide reads, in one-letter code: Probable GTP-binding protein EngB (199 aa).

The 176-residue stretch at 21 to 196 (TKPEYAFIGR…LTYIDEINKQ (176 aa)) folds into the EngB-type G domain. GTP-binding positions include 29–36 (GRSNVGKS), 56–60 (GKTQL), 74–77 (DLPG), 141–144 (TKID), and 175–177 (TSS). Residues serine 36 and threonine 58 each contribute to the Mg(2+) site.

The protein belongs to the TRAFAC class TrmE-Era-EngA-EngB-Septin-like GTPase superfamily. EngB GTPase family. Mg(2+) serves as cofactor.

Its function is as follows. Necessary for normal cell division and for the maintenance of normal septation. In Cytophaga hutchinsonii (strain ATCC 33406 / DSM 1761 / CIP 103989 / NBRC 15051 / NCIMB 9469 / D465), this protein is Probable GTP-binding protein EngB.